Reading from the N-terminus, the 312-residue chain is Olfactory receptor 6C2 (312 aa).

Over Met-1–Val-23 the chain is Extracellular. N-linked (GlcNAc...) asparagine glycosylation occurs at Asn-3. Residues Leu-24–Ile-44 form a helical membrane-spanning segment. Residues Thr-45–His-52 lie on the Cytoplasmic side of the membrane. The helical transmembrane segment at Leu-53–Thr-73 threads the bilayer. The Extracellular segment spans residues Val-74–Ser-97. An N-linked (GlcNAc...) asparagine glycan is attached at Asn-82. A disulfide bridge connects residues Cys-95 and Cys-187. The chain crosses the membrane as a helical span at residues Gln-98–Tyr-118. Residues Asp-119–Arg-137 are Cytoplasmic-facing. Residues Val-138–Leu-158 form a helical membrane-spanning segment. Topologically, residues Ser-159–Gln-195 are extracellular. A helical membrane pass occupies residues Met-196–Ser-215. At Tyr-216–Ala-235 the chain is on the cytoplasmic side. A helical transmembrane segment spans residues Phe-236 to Ile-256. Over Tyr-257 to Asn-269 the chain is Extracellular. Residues Lys-270–Leu-290 traverse the membrane as a helical segment. Topologically, residues Arg-291 to Lys-312 are cytoplasmic.

Belongs to the G-protein coupled receptor 1 family.

It is found in the cell membrane. Functionally, odorant receptor. This Homo sapiens (Human) protein is Olfactory receptor 6C2 (OR6C2).